Reading from the N-terminus, the 82-residue chain is Sec-independent protein translocase protein TatA (82 aa).

Residues 1–21 (MGGISVWQLLIIAVIVVLLFG) form a helical membrane-spanning segment. A disordered region spans residues 41 to 82 (KAMSEDEPAKKDDKDADFEPKSLEEQQKKEAAPESKKDKEQA). Basic and acidic residues predominate over residues 42 to 82 (AMSEDEPAKKDDKDADFEPKSLEEQQKKEAAPESKKDKEQA).

The protein belongs to the TatA/E family. The Tat system comprises two distinct complexes: a TatABC complex, containing multiple copies of TatA, TatB and TatC subunits, and a separate TatA complex, containing only TatA subunits. Substrates initially bind to the TatABC complex, which probably triggers association of the separate TatA complex to form the active translocon.

The protein resides in the cell inner membrane. In terms of biological role, part of the twin-arginine translocation (Tat) system that transports large folded proteins containing a characteristic twin-arginine motif in their signal peptide across membranes. TatA could form the protein-conducting channel of the Tat system. The chain is Sec-independent protein translocase protein TatA from Vibrio campbellii (strain ATCC BAA-1116).